We begin with the raw amino-acid sequence, 498 residues long: Fascin-3 (498 aa).

Belongs to the fascin family. In terms of tissue distribution, expressed in testis.

It localises to the cytoplasm. Its subcellular location is the cytoskeleton. Functionally, acts as an actin bundling protein. This Homo sapiens (Human) protein is Fascin-3 (FSCN3).